The following is a 197-amino-acid chain: uncharacterized protein (197 aa).

Residues 1 to 23 (MSARAPKELRLALPPCLLNRTFA) form the signal peptide. 2 N-linked (GlcNAc...) asparagine glycosylation sites follow: asparagine 19 and asparagine 26. Residues 24 to 61 (SPNASGSGNTGARGPGAGGSGTCITQVGQQLFQSFSST) lie on the Extracellular side of the membrane. The chain crosses the membrane as a helical span at residues 62-82 (LVLIVLVTLIFCLIVLSLSTF). Topologically, residues 83-197 (HIHKRRMKKR…EGLLQTVVLS (115 aa)) are cytoplasmic. Residues 94-179 (MQRAQEEYER…ASSPQGAHAV (86 aa)) form a disordered region. Composition is skewed to basic and acidic residues over residues 96–107 (RAQEEYERDHCS) and 125–136 (HAKETRLERQPR). The span at 147 to 161 (SSSSSSSPGLPCQGP) shows a compositional bias: low complexity. The span at 162-171 (CAPPPPPPAS) shows a compositional bias: pro residues.

The protein resides in the membrane. This is an uncharacterized protein from Pongo abelii (Sumatran orangutan).